Here is a 554-residue protein sequence, read N- to C-terminus: CTP synthase (554 aa).

Positions M1–L265 are amidoligase domain. S13 lines the CTP pocket. A UTP-binding site is contributed by S13. ATP-binding positions include S14 to I19 and D71. Mg(2+) is bound by residues D71 and E139. CTP-binding positions include D146–E148, K186–Q191, and K222. Residues K186 to Q191 and K222 contribute to the UTP site. In terms of domain architecture, Glutamine amidotransferase type-1 spans T292 to G545. Residue G353 coordinates L-glutamine. Residue C380 is the Nucleophile; for glutamine hydrolysis of the active site. Residues Y381 to Q384, E404, and R471 each bind L-glutamine. Catalysis depends on residues H518 and E520.

This sequence belongs to the CTP synthase family. Homotetramer.

The catalysed reaction is UTP + L-glutamine + ATP + H2O = CTP + L-glutamate + ADP + phosphate + 2 H(+). It catalyses the reaction L-glutamine + H2O = L-glutamate + NH4(+). The enzyme catalyses UTP + NH4(+) + ATP = CTP + ADP + phosphate + 2 H(+). It functions in the pathway pyrimidine metabolism; CTP biosynthesis via de novo pathway; CTP from UDP: step 2/2. Its activity is regulated as follows. Allosterically activated by GTP, when glutamine is the substrate; GTP has no effect on the reaction when ammonia is the substrate. The allosteric effector GTP functions by stabilizing the protein conformation that binds the tetrahedral intermediate(s) formed during glutamine hydrolysis. Inhibited by the product CTP, via allosteric rather than competitive inhibition. Its function is as follows. Catalyzes the ATP-dependent amination of UTP to CTP with either L-glutamine or ammonia as the source of nitrogen. Regulates intracellular CTP levels through interactions with the four ribonucleotide triphosphates. The polypeptide is CTP synthase (Xylella fastidiosa (strain M23)).